We begin with the raw amino-acid sequence, 316 residues long: Protein FLUORESCENT IN BLUE LIGHT, chloroplastic (316 aa).

The N-terminal 26 residues, 1 to 26, are a transit peptide targeting the chloroplast; the sequence is MAALIRCCSSFSHTSGGQPPPRDKSR. The helical transmembrane segment at 125–145 threads the bilayer; sequence MFSMPILLLVALIGATVGGLL. Positions 144-175 form a coiled coil; the sequence is LLARQRKGELQRLNEQLRQINAALRRQAKIES. TPR repeat units follow at residues 203–236, 243–276, and 283–316; these read LISKLKTGKTFLRNQEPEKAYTEFKIALELAQSL, KKAARGLGASLQRQGKYREAIQYHSMVLAISKRE, and TEAYGAIADCYTELGDLEKAGKFYDTYIARLETD.

As to quaternary structure, part of the FLU-containing chloroplast membrane complex composed of FLU, CRD1, PORB, PORC, CHLP and HEMA1. Interacts with HEMA1 (via C-terminus) only in the absence of light. No interaction with HEMA2.

The protein localises to the plastid. The protein resides in the chloroplast membrane. It is found in the chloroplast thylakoid membrane. In terms of biological role, negative regulator of tetrapyrrole biosynthesis (including chlorophyll) in chloroplasts, probably via HEMA1 repression. Inhibits especially the magnesium ion Mg(2+) branch of tetrapyrrole biosynthesis, but independently of heme. The chain is Protein FLUORESCENT IN BLUE LIGHT, chloroplastic (FLU) from Arabidopsis thaliana (Mouse-ear cress).